Consider the following 373-residue polypeptide: Indole glucosinolate O-methyltransferase 3 (373 aa).

Positions 217, 240, 260, 261, and 274 each coordinate S-adenosyl-L-homocysteine. His-278 serves as the catalytic Proton acceptor.

Belongs to the class I-like SAM-binding methyltransferase superfamily. Cation-independent O-methyltransferase family.

It functions in the pathway secondary metabolite biosynthesis. Its function is as follows. Involved in indole glucosinolate biosynthesis. Catalyzes methoxylation reactions of the glucosinolate indole ring. Converts the hydroxy intermediates 4-hydroxy-indol-3-yl-methylglucosinolate (4OH-I3M) and 1-hydroxy-indol-3-yl-methylglucosinolate (1OH-I3M) to 4-methoxy-indol-3-yl-methylglucosinolate (4MO-I3M) and 1-methoxy-indol-3-yl-methylglucosinolate(1MO-I3M), respectively. This chain is Indole glucosinolate O-methyltransferase 3, found in Arabidopsis thaliana (Mouse-ear cress).